The following is a 601-amino-acid chain: Alpha-terpineol synthase, chloroplastic (601 aa).

The N-terminal 47 residues, 1–47 (MSTISIHHVGILRNPLHSKSKRASINKPWSLSLPRSSSASRLVEPCR), are a transit peptide targeting the chloroplast. Residues aspartate 357 and aspartate 361 each coordinate Mn(2+). Residues 357–361 (DDVYD) carry the DDXXD motif motif. 2 homodimerization regions span residues 363 to 369 (YGTLDEL) and 435 to 471 (EAEW…ELSL). Residues aspartate 499 and glutamate 507 each contribute to the Mn(2+) site.

Belongs to the terpene synthase family. Homodimer. Mn(2+) is required as a cofactor. The cofactor is Mg(2+).

It is found in the plastid. The protein resides in the chloroplast. The enzyme catalyses (2E)-geranyl diphosphate + H2O = (S)-alpha-terpineol + diphosphate. It catalyses the reaction (2E)-geranyl diphosphate + H2O = (R)-alpha-terpineol + diphosphate. It participates in secondary metabolite biosynthesis; terpenoid biosynthesis. In terms of biological role, involved in the biosynthesis of phenolic monoterpenes natural products. Monoterpene synthase which catalyzes the conversion of geranyl diphosphate (GPP) to alpha-terpineol (isomer is not determined). The chain is Alpha-terpineol synthase, chloroplastic from Thymus caespititius (Cretan thyme).